A 224-amino-acid polypeptide reads, in one-letter code: Germin-like protein 8-8 (224 aa).

The first 22 residues, 1-22 (MASPSFCLLAALLALVSWQAIA), serve as a signal peptide directing secretion. Cys32 and Cys47 are joined by a disulfide. A Cupin type-1 domain is found at 62 to 212 (AMLDTPRKTN…AFQVEKGTID (151 aa)). Asn76 carries N-linked (GlcNAc...) asparagine glycosylation. Residues His109, His111, and Glu116 each coordinate Mn(2+). N-linked (GlcNAc...) asparagine glycosylation is present at Asn135. His157 is a binding site for Mn(2+).

This sequence belongs to the germin family. In terms of assembly, oligomer (believed to be a pentamer but probably hexamer).

The protein resides in the secreted. Its subcellular location is the extracellular space. The protein localises to the apoplast. Plays a role in broad-spectrum disease resistance. Probably has no oxalate oxidase activity even if the active site is conserved. The sequence is that of Germin-like protein 8-8 from Oryza sativa subsp. japonica (Rice).